Consider the following 167-residue polypeptide: Phospholipase A2 (167 aa).

Trp-38, Gly-40, and Gly-42 together coordinate Ca(2+). Disulfide bonds link Cys-39/Cys-61, Cys-60/Cys-99, Cys-67/Cys-92, Cys-90/Cys-127, and Cys-132/Cys-144. The N-linked (GlcNAc...) asparagine glycan is linked to Asn-47. Residue His-64 is part of the active site. Asp-65 lines the Ca(2+) pocket. Residues 136–140 (ARSAR) constitute a propeptide that is removed on maturation.

It belongs to the phospholipase A2 family. Group III subfamily. In terms of assembly, heterodimer composed of a large subunit and a small subunit; disulfide-linked. Ca(2+) serves as cofactor. Expressed by the venom gland.

The protein localises to the secreted. The catalysed reaction is a 1,2-diacyl-sn-glycero-3-phosphocholine + H2O = a 1-acyl-sn-glycero-3-phosphocholine + a fatty acid + H(+). In terms of biological role, phospholipase toxin, which catalyzes the calcium-dependent hydrolysis of the 2-acyl groups in 3-sn-phosphoglycerides. Inhibits both skeletal (RYR1) and cardiac (RYR2) ryanodine receptors (calcium release channels). Probably blocks ryanodine receptors by generating a lipid product. Shows hemolytic activity, but it is not know if it is direct or indirect. The protein is Phospholipase A2 of Hottentotta tamulus (Eastern Indian scorpion).